Here is a 429-residue protein sequence, read N- to C-terminus: Enolase (429 aa).

(2R)-2-phosphoglycerate is bound at residue Q162. E204 serves as the catalytic Proton donor. Mg(2+)-binding residues include D241, E283, and D310. (2R)-2-phosphoglycerate-binding residues include K335, R364, S365, and K386. K335 serves as the catalytic Proton acceptor.

The protein belongs to the enolase family. Mg(2+) is required as a cofactor.

The protein resides in the cytoplasm. It localises to the secreted. The protein localises to the cell surface. The catalysed reaction is (2R)-2-phosphoglycerate = phosphoenolpyruvate + H2O. It functions in the pathway carbohydrate degradation; glycolysis; pyruvate from D-glyceraldehyde 3-phosphate: step 4/5. Catalyzes the reversible conversion of 2-phosphoglycerate (2-PG) into phosphoenolpyruvate (PEP). It is essential for the degradation of carbohydrates via glycolysis. The sequence is that of Enolase from Mycolicibacterium gilvum (strain PYR-GCK) (Mycobacterium gilvum (strain PYR-GCK)).